The chain runs to 223 residues: MOB kinase activator-like 4 (223 aa).

The tract at residues 1–21 is disordered; the sequence is MKMADGSTILRRNRPGTKSKD. Zn(2+) contacts are provided by Cys92, Cys97, His169, and His174.

This sequence belongs to the MOB1/phocein family.

The chain is MOB kinase activator-like 4 (Mob4) from Drosophila melanogaster (Fruit fly).